Reading from the N-terminus, the 68-residue chain is Protein VNG_1110C (68 aa).

In Halobacterium salinarum (strain ATCC 700922 / JCM 11081 / NRC-1) (Halobacterium halobium), this protein is Protein VNG_1110C.